The sequence spans 225 residues: Cytidylate kinase (225 aa).

11–19 (GPAAAGKST) provides a ligand contact to ATP.

This sequence belongs to the cytidylate kinase family. Type 1 subfamily.

It is found in the cytoplasm. The catalysed reaction is CMP + ATP = CDP + ADP. It catalyses the reaction dCMP + ATP = dCDP + ADP. The chain is Cytidylate kinase from Bacillus pumilus (strain SAFR-032).